Reading from the N-terminus, the 91-residue chain is Large ribosomal subunit protein uL23c (91 aa).

This sequence belongs to the universal ribosomal protein uL23 family. As to quaternary structure, part of the 50S ribosomal subunit.

Its subcellular location is the plastid. It is found in the chloroplast. Its function is as follows. Binds to 23S rRNA. This Chaetosphaeridium globosum (Charophycean green alga) protein is Large ribosomal subunit protein uL23c (rpl23).